The primary structure comprises 82 residues: Small ribosomal subunit protein bS18 (82 aa).

The interval 1-20 (MVDINQIPTRRPFHRRRKTC) is disordered.

This sequence belongs to the bacterial ribosomal protein bS18 family. Part of the 30S ribosomal subunit. Forms a tight heterodimer with protein bS6.

Functionally, binds as a heterodimer with protein bS6 to the central domain of the 16S rRNA, where it helps stabilize the platform of the 30S subunit. The protein is Small ribosomal subunit protein bS18 of Mesorhizobium japonicum (strain LMG 29417 / CECT 9101 / MAFF 303099) (Mesorhizobium loti (strain MAFF 303099)).